Consider the following 105-residue polypeptide: Type VII secretion system extracellular protein D (105 aa).

Forms heterodimers with EsxB.

The protein localises to the secreted. In Staphylococcus aureus (strain USA300), this protein is Type VII secretion system extracellular protein D.